The primary structure comprises 288 residues: Polyamine aminopropyltransferase (288 aa).

The 234-residue stretch at Ser9–Met242 folds into the PABS domain. Gln36 lines the S-methyl-5'-thioadenosine pocket. Positions 67 and 91 each coordinate spermidine. Residues Glu111 and Asn143–Gly144 contribute to the S-methyl-5'-thioadenosine site. Asp162 (proton acceptor) is an active-site residue. Pro169 contacts S-methyl-5'-thioadenosine.

This sequence belongs to the spermidine/spermine synthase family. In terms of assembly, homodimer or homotetramer.

The protein localises to the cytoplasm. The catalysed reaction is S-adenosyl 3-(methylsulfanyl)propylamine + putrescine = S-methyl-5'-thioadenosine + spermidine + H(+). The protein operates within amine and polyamine biosynthesis; spermidine biosynthesis; spermidine from putrescine: step 1/1. Its function is as follows. Catalyzes the irreversible transfer of a propylamine group from the amino donor S-adenosylmethioninamine (decarboxy-AdoMet) to putrescine (1,4-diaminobutane) to yield spermidine. The polypeptide is Polyamine aminopropyltransferase (Prochlorococcus marinus (strain NATL2A)).